The primary structure comprises 168 residues: 6,7-dimethyl-8-ribityllumazine synthase (168 aa).

Residues phenylalanine 24, 58 to 60 (ALE), and 82 to 84 (AVI) contribute to the 5-amino-6-(D-ribitylamino)uracil site. 87-88 (ET) contacts (2S)-2-hydroxy-3-oxobutyl phosphate. Residue histidine 90 is the Proton donor of the active site. A 5-amino-6-(D-ribitylamino)uracil-binding site is contributed by asparagine 115. Residue arginine 129 coordinates (2S)-2-hydroxy-3-oxobutyl phosphate.

This sequence belongs to the DMRL synthase family.

The catalysed reaction is (2S)-2-hydroxy-3-oxobutyl phosphate + 5-amino-6-(D-ribitylamino)uracil = 6,7-dimethyl-8-(1-D-ribityl)lumazine + phosphate + 2 H2O + H(+). Its pathway is cofactor biosynthesis; riboflavin biosynthesis; riboflavin from 2-hydroxy-3-oxobutyl phosphate and 5-amino-6-(D-ribitylamino)uracil: step 1/2. Functionally, catalyzes the formation of 6,7-dimethyl-8-ribityllumazine by condensation of 5-amino-6-(D-ribitylamino)uracil with 3,4-dihydroxy-2-butanone 4-phosphate. This is the penultimate step in the biosynthesis of riboflavin. The polypeptide is 6,7-dimethyl-8-ribityllumazine synthase (Paraburkholderia phytofirmans (strain DSM 17436 / LMG 22146 / PsJN) (Burkholderia phytofirmans)).